The following is a 225-amino-acid chain: Holliday junction branch migration complex subunit RuvA (225 aa).

The interval 1 to 71 (MISWISGELV…EDSDLLFGFS (71 aa)) is domain I. The segment at 72–150 (SKDQKNFFIE…NELKIQEEKS (79 aa)) is domain II. Residues 151–161 (KDEFHIKDNKI) are flexible linker. Residues 161-225 (INKIVSDIEL…LDNDSSNIVR (65 aa)) form a domain III region.

Belongs to the RuvA family. Homotetramer. Forms an RuvA(8)-RuvB(12)-Holliday junction (HJ) complex. HJ DNA is sandwiched between 2 RuvA tetramers; dsDNA enters through RuvA and exits via RuvB. An RuvB hexamer assembles on each DNA strand where it exits the tetramer. Each RuvB hexamer is contacted by two RuvA subunits (via domain III) on 2 adjacent RuvB subunits; this complex drives branch migration. In the full resolvosome a probable DNA-RuvA(4)-RuvB(12)-RuvC(2) complex forms which resolves the HJ.

The protein localises to the cytoplasm. In terms of biological role, the RuvA-RuvB-RuvC complex processes Holliday junction (HJ) DNA during genetic recombination and DNA repair, while the RuvA-RuvB complex plays an important role in the rescue of blocked DNA replication forks via replication fork reversal (RFR). RuvA specifically binds to HJ cruciform DNA, conferring on it an open structure. The RuvB hexamer acts as an ATP-dependent pump, pulling dsDNA into and through the RuvAB complex. HJ branch migration allows RuvC to scan DNA until it finds its consensus sequence, where it cleaves and resolves the cruciform DNA. This is Holliday junction branch migration complex subunit RuvA from Prochlorococcus marinus (strain MIT 9312).